Consider the following 207-residue polypeptide: Ribonuclease HII (207 aa).

The region spanning 12-201 (DLVAGVDEVG…VRAAWEAREG (190 aa)) is the RNase H type-2 domain. A divalent metal cation contacts are provided by D18, E19, and D110.

Belongs to the RNase HII family. The cofactor is Mn(2+). It depends on Mg(2+) as a cofactor.

It localises to the cytoplasm. It catalyses the reaction Endonucleolytic cleavage to 5'-phosphomonoester.. Endonuclease that specifically degrades the RNA of RNA-DNA hybrids. This Pseudomonas putida (strain ATCC 47054 / DSM 6125 / CFBP 8728 / NCIMB 11950 / KT2440) protein is Ribonuclease HII.